The following is a 498-amino-acid chain: ATP synthase subunit beta, chloroplastic (498 aa).

An ATP-binding site is contributed by 172 to 179 (GGAGVGKT).

The protein belongs to the ATPase alpha/beta chains family. As to quaternary structure, F-type ATPases have 2 components, CF(1) - the catalytic core - and CF(0) - the membrane proton channel. CF(1) has five subunits: alpha(3), beta(3), gamma(1), delta(1), epsilon(1). CF(0) has four main subunits: a(1), b(1), b'(1) and c(9-12).

The protein localises to the plastid. Its subcellular location is the chloroplast thylakoid membrane. The catalysed reaction is ATP + H2O + 4 H(+)(in) = ADP + phosphate + 5 H(+)(out). Functionally, produces ATP from ADP in the presence of a proton gradient across the membrane. The catalytic sites are hosted primarily by the beta subunits. The protein is ATP synthase subunit beta, chloroplastic of Beta vulgaris (Sugar beet).